The sequence spans 232 residues: Large ribosomal subunit protein uL1 (232 aa).

Belongs to the universal ribosomal protein uL1 family. In terms of assembly, part of the 50S ribosomal subunit.

Its function is as follows. Binds directly to 23S rRNA. The L1 stalk is quite mobile in the ribosome, and is involved in E site tRNA release. Functionally, protein L1 is also a translational repressor protein, it controls the translation of the L11 operon by binding to its mRNA. The sequence is that of Large ribosomal subunit protein uL1 from Bacillus licheniformis (strain ATCC 14580 / DSM 13 / JCM 2505 / CCUG 7422 / NBRC 12200 / NCIMB 9375 / NCTC 10341 / NRRL NRS-1264 / Gibson 46).